Reading from the N-terminus, the 348-residue chain is Sulfate/thiosulfate import ATP-binding protein CysA (348 aa).

Residues 3–237 (IEIRNITKSF…PATPFVCQFI (235 aa)) enclose the ABC transporter domain. 35–42 (GPSGCGKT) lines the ATP pocket.

The protein belongs to the ABC transporter superfamily. Sulfate/tungstate importer (TC 3.A.1.6) family. As to quaternary structure, the complex is composed of two ATP-binding proteins (CysA), two transmembrane proteins (CysT and CysW) and a solute-binding protein (CysP).

The protein resides in the cell inner membrane. It catalyses the reaction sulfate(out) + ATP + H2O = sulfate(in) + ADP + phosphate + H(+). The enzyme catalyses thiosulfate(out) + ATP + H2O = thiosulfate(in) + ADP + phosphate + H(+). Part of the ABC transporter complex CysAWTP involved in sulfate/thiosulfate import. Responsible for energy coupling to the transport system. The polypeptide is Sulfate/thiosulfate import ATP-binding protein CysA (Methylococcus capsulatus (strain ATCC 33009 / NCIMB 11132 / Bath)).